The sequence spans 337 residues: Undecaprenyl-phosphate 4-deoxy-4-formamido-L-arabinose transferase (337 aa).

Transmembrane regions (helical) follow at residues 235–255 (LSII…LLIV) and 270–290 (FVLF…MGLL).

It belongs to the glycosyltransferase 2 family.

The protein localises to the cell inner membrane. It carries out the reaction UDP-4-deoxy-4-formamido-beta-L-arabinose + di-trans,octa-cis-undecaprenyl phosphate = 4-deoxy-4-formamido-alpha-L-arabinopyranosyl di-trans,octa-cis-undecaprenyl phosphate + UDP. Its pathway is glycolipid biosynthesis; 4-amino-4-deoxy-alpha-L-arabinose undecaprenyl phosphate biosynthesis; 4-amino-4-deoxy-alpha-L-arabinose undecaprenyl phosphate from UDP-4-deoxy-4-formamido-beta-L-arabinose and undecaprenyl phosphate: step 1/2. It participates in bacterial outer membrane biogenesis; lipopolysaccharide biosynthesis. Catalyzes the transfer of 4-deoxy-4-formamido-L-arabinose from UDP to undecaprenyl phosphate. The modified arabinose is attached to lipid A and is required for resistance to polymyxin and cationic antimicrobial peptides. This is Undecaprenyl-phosphate 4-deoxy-4-formamido-L-arabinose transferase from Pseudomonas syringae pv. syringae (strain B728a).